The primary structure comprises 102 residues: Circadian clock oscillator protein KaiB (102 aa).

It belongs to the KaiB family. In terms of assembly, undergoes a major conformational rearrangment; in the free state forms homotetramers with 2 dimers. When bound to the CI domain of KaiC switches to a monomeric thioredoxin-fold (KaiB(fs)). Monomers, homodimers and homotetramers are detected in solution; at low concentrations only monomers are seen. In vitro forms KaiC(6):KaiB(1) and KaiC(6):KaiB(6) complexes. Only associates with 'Ser-431'-phosphorylated KaiC (and not with doubly phosphorylated KaiC). Complex formation between KaiB and KaiC is regulated by the phosphorylation state of KaiC and by an ATP hydrolysis-driven conformation change in the CI ring of KaiC; complex formation is slow. Slow complex formation is crucial for the timing of the circadian period. In low resolution cryo-EM forms a KaiC(6):KaiB(6) complex. The KaiABC complex composition changes during the circadian cycle to control KaiC phosphorylation. Complexes KaiC(6), KaiA(2-4):KaiC(6), KaiB(6):KaiC(6) and KaiC(6):KaiB(6):KaiA(12) are among the most important forms, many form cooperatively. The KaiB:KaiC complex is more prevalent at 16 hours (in the dark) than at 4 hours (in the light) in the circadian cycle. The KaiA:KaiB complex is only found at 20-24 hours in the circadian cycle (subjective night). Binds to the CI domain of KaiC; SasA and KaiB compete to bind to the CI domain.

The protein localises to the cytoplasm. It localises to the cell membrane. Key component of the KaiABC oscillator complex, which constitutes the main circadian regulator in cyanobacteria. Complex composition changes during the circadian cycle to control KaiC phosphorylation. KaiA stimulates KaiC autophosphorylation, while KaiB sequesters KaiA, leading to KaiC autodephosphorylation. KaiA binding to the KaiC CII domain yields KaiA(2-4):KaiC(6) complexes which stimulate KaiC autophosphorylation. Phospho-Ser-431 KaiC accumulation triggers binding of KaiB to form the KaiB(6):KaiC(6) complex, leading to changes in the output regulators CikA and SasA. KaiB switches to a thioredoxin-like fold (KaiB(fs)) in complex with KaiC. KaiB(6):KaiC(6) formation exposes a site for KaiA binding that sequesters KaiA from the CII domain, making the KaiC(6):KaiB(6):KaiA(12) complex that results in KaiC autodephosphorylation. Complete dephosphorylation of KaiC leads to dissociation of KaiA(2):KaiB(1), completing 1 cycle of the Kai oscillator. Functionally, circadian oscillations can be generated in vitro by incubating KaiA, KaiB and KaiC with 1 mM ATP. The cycle is self-sustainable for at least 3 cycles and resistant to temperature changes. A very robust clock is reconstituted with KaiA, KaiB, KaiC, SasA, CikA and RpaA; output is measured by transcription from an appropriate reporter. In terms of biological role, a metamorphic protein which reversibly switches between an inactive tetrameric fold and a rare, thioredoxin-like monomeric fold (KaiB(fs)). KaiB(fs) binds phospho-KaiC, KaiA and CikA. KaiA and CikA compete for binding to KaiB(fs), and KaiB(fs) and SasA compete for binding to KaiC, thus the clock oscillator and output signal pathway are tightly coupled. The protein is Circadian clock oscillator protein KaiB of Synechococcus elongatus (strain ATCC 33912 / PCC 7942 / FACHB-805) (Anacystis nidulans R2).